We begin with the raw amino-acid sequence, 311 residues long: Acetyl-coenzyme A carboxylase carboxyl transferase subunit alpha (311 aa).

A CoA carboxyltransferase C-terminal domain is found at 32-289 (ELNLLEERLR…KSVLEQKLAQ (258 aa)).

This sequence belongs to the AccA family. As to quaternary structure, acetyl-CoA carboxylase is a heterohexamer composed of biotin carboxyl carrier protein (AccB), biotin carboxylase (AccC) and two subunits each of ACCase subunit alpha (AccA) and ACCase subunit beta (AccD).

The protein resides in the cytoplasm. The enzyme catalyses N(6)-carboxybiotinyl-L-lysyl-[protein] + acetyl-CoA = N(6)-biotinyl-L-lysyl-[protein] + malonyl-CoA. Its pathway is lipid metabolism; malonyl-CoA biosynthesis; malonyl-CoA from acetyl-CoA: step 1/1. Its function is as follows. Component of the acetyl coenzyme A carboxylase (ACC) complex. First, biotin carboxylase catalyzes the carboxylation of biotin on its carrier protein (BCCP) and then the CO(2) group is transferred by the carboxyltransferase to acetyl-CoA to form malonyl-CoA. The polypeptide is Acetyl-coenzyme A carboxylase carboxyl transferase subunit alpha (Exiguobacterium sibiricum (strain DSM 17290 / CCUG 55495 / CIP 109462 / JCM 13490 / 255-15)).